Here is a 517-residue protein sequence, read N- to C-terminus: Lysine--tRNA ligase (517 aa).

The tract at residues 1–21 is disordered; that stretch reads MTEPNRAQAPAQNKAAADTPA. Residues 7–20 are compositionally biased toward low complexity; the sequence is AQAPAQNKAAADTP. Mg(2+)-binding residues include Glu427 and Glu434.

This sequence belongs to the class-II aminoacyl-tRNA synthetase family. As to quaternary structure, homodimer. The cofactor is Mg(2+).

The protein localises to the cytoplasm. It catalyses the reaction tRNA(Lys) + L-lysine + ATP = L-lysyl-tRNA(Lys) + AMP + diphosphate. The polypeptide is Lysine--tRNA ligase (Cupriavidus taiwanensis (strain DSM 17343 / BCRC 17206 / CCUG 44338 / CIP 107171 / LMG 19424 / R1) (Ralstonia taiwanensis (strain LMG 19424))).